The primary structure comprises 299 residues: Large ribosomal subunit protein uL18 (299 aa).

It belongs to the universal ribosomal protein uL18 family. In terms of assembly, component of the large ribosomal subunit (LSU). Interacts with Fmr1 to form the RNA-induced silencing complex (RISC), a ribonucleoprotein (RNP) complex involved in translation regulation, other components of the complex are Rm62, RpL11, AGO2 and Dcr-1.

It localises to the cytoplasm. It is found in the nucleus. Component of the ribosome, a large ribonucleoprotein complex responsible for the synthesis of proteins in the cell. The small ribosomal subunit (SSU) binds messenger RNAs (mRNAs) and translates the encoded message by selecting cognate aminoacyl-transfer RNA (tRNA) molecules. The large subunit (LSU) contains the ribosomal catalytic site termed the peptidyl transferase center (PTC), which catalyzes the formation of peptide bonds, thereby polymerizing the amino acids delivered by tRNAs into a polypeptide chain. The nascent polypeptides leave the ribosome through a tunnel in the LSU and interact with protein factors that function in enzymatic processing, targeting, and the membrane insertion of nascent chains at the exit of the ribosomal tunnel. In Drosophila melanogaster (Fruit fly), this protein is Large ribosomal subunit protein uL18 (RpL5).